Here is a 1177-residue protein sequence, read N- to C-terminus: DNA-directed RNA polymerase subunit beta (1177 aa).

Residues 1 to 36 are disordered; the sequence is MEGCILADSRQSKTAASPSPSRPQSSSNNSVPGAPN. Positions 17 to 32 are enriched in low complexity; the sequence is SPSPSRPQSSSNNSVP.

This sequence belongs to the RNA polymerase beta chain family. As to quaternary structure, the RNAP catalytic core consists of 2 alpha, 1 beta, 1 beta' and 1 omega subunit. When a sigma factor is associated with the core the holoenzyme is formed, which can initiate transcription.

The enzyme catalyses RNA(n) + a ribonucleoside 5'-triphosphate = RNA(n+1) + diphosphate. Functionally, DNA-dependent RNA polymerase catalyzes the transcription of DNA into RNA using the four ribonucleoside triphosphates as substrates. This is DNA-directed RNA polymerase subunit beta from Mycobacterium tuberculosis (strain ATCC 25177 / H37Ra).